The primary structure comprises 357 residues: MLPVCHRFCDHLLLLLLLPSTTLAPAPASMGPAAALLQVLGLPEAPRSVPTHRPVPPVMWRLFRRRDPQEARVGRPLRPCHVEELGVAGNIVRHIPDSGLSSRPAQPARTSGLCPEWTVVFDLSNVEPTERPTRARLELRLEAESEDTGGWELSVALWADAEHPGPELLRVPAPPGVLLRADLLGTAVAANASVPCTVRLALSLHPGATAACGRLAEASLLLVTLDPRLCPLPRLRRHTEPRVEVGPVGTCRTRRLHVSFREVGWHRWVIAPRGFLANFCQGTCALPETLRGPGGPPALNHAVLRALMHAAAPTPGAGSPCCVPERLSPISVLFFDNSDNVVLRHYEDMVVDECGCR.

The signal sequence occupies residues 1–23; it reads MLPVCHRFCDHLLLLLLLPSTTL. Residues 24–237 constitute a propeptide that is removed on maturation; that stretch reads APAPASMGPA…RLCPLPRLRR (214 aa). Asn-191 carries an N-linked (GlcNAc...) asparagine glycan. Disulfide bonds link Cys-251-Cys-322, Cys-280-Cys-354, and Cys-284-Cys-356.

Belongs to the TGF-beta family. As to quaternary structure, homodimer; disulfide-linked. In terms of tissue distribution, expressed almost exclusively in the nervous system.

It localises to the secreted. Functionally, may mediate cell differentiation events during embryonic development. This chain is Embryonic growth/differentiation factor 1 (Gdf1), found in Mus musculus (Mouse).